The chain runs to 568 residues: Proline--tRNA ligase (568 aa).

It belongs to the class-II aminoacyl-tRNA synthetase family. ProS type 1 subfamily. In terms of assembly, homodimer.

The protein localises to the cytoplasm. The catalysed reaction is tRNA(Pro) + L-proline + ATP = L-prolyl-tRNA(Pro) + AMP + diphosphate. Its function is as follows. Catalyzes the attachment of proline to tRNA(Pro) in a two-step reaction: proline is first activated by ATP to form Pro-AMP and then transferred to the acceptor end of tRNA(Pro). As ProRS can inadvertently accommodate and process non-cognate amino acids such as alanine and cysteine, to avoid such errors it has two additional distinct editing activities against alanine. One activity is designated as 'pretransfer' editing and involves the tRNA(Pro)-independent hydrolysis of activated Ala-AMP. The other activity is designated 'posttransfer' editing and involves deacylation of mischarged Ala-tRNA(Pro). The misacylated Cys-tRNA(Pro) is not edited by ProRS. This is Proline--tRNA ligase from Chlamydia pneumoniae (Chlamydophila pneumoniae).